Consider the following 418-residue polypeptide: Tyrosine--tRNA ligase (418 aa).

Residue Y34 participates in L-tyrosine binding. Residues 39–48 carry the 'HIGH' region motif; the sequence is PTADSLHLGH. Residues Y169 and Q173 each contribute to the L-tyrosine site. The short motif at 229 to 233 is the 'KMSKS' region element; that stretch reads KFGKS. K232 is a binding site for ATP. Residues 352 to 418 form the S4 RNA-binding domain; that stretch reads LNIVDMLVTA…GKKKYAVLTY (67 aa).

It belongs to the class-I aminoacyl-tRNA synthetase family. TyrS type 1 subfamily. Homodimer.

The protein resides in the cytoplasm. The enzyme catalyses tRNA(Tyr) + L-tyrosine + ATP = L-tyrosyl-tRNA(Tyr) + AMP + diphosphate + H(+). Functionally, catalyzes the attachment of tyrosine to tRNA(Tyr) in a two-step reaction: tyrosine is first activated by ATP to form Tyr-AMP and then transferred to the acceptor end of tRNA(Tyr). This is Tyrosine--tRNA ligase from Streptococcus equi subsp. zooepidemicus (strain H70).